Consider the following 166-residue polypeptide: Co-chaperone protein HscB homolog (166 aa).

Positions glutamine 3–threonine 75 constitute a J domain.

This sequence belongs to the HscB family. In terms of assembly, interacts with HscA and stimulates its ATPase activity.

Co-chaperone involved in the maturation of iron-sulfur cluster-containing proteins. Seems to help targeting proteins to be folded toward HscA. The polypeptide is Co-chaperone protein HscB homolog (Neisseria gonorrhoeae (strain NCCP11945)).